The chain runs to 640 residues: Threonine--tRNA ligase (640 aa).

One can recognise a TGS domain in the interval 1–61 (MPTITLPDGS…THDATLQIIT (61 aa)). The catalytic stretch occupies residues 242–533 (DHRKIGKQLD…LIEHYAGVFP (292 aa)). Zn(2+) is bound by residues Cys333, His384, and His510.

The protein belongs to the class-II aminoacyl-tRNA synthetase family. In terms of assembly, homodimer. Requires Zn(2+) as cofactor.

The protein resides in the cytoplasm. It carries out the reaction tRNA(Thr) + L-threonine + ATP = L-threonyl-tRNA(Thr) + AMP + diphosphate + H(+). In terms of biological role, catalyzes the attachment of threonine to tRNA(Thr) in a two-step reaction: L-threonine is first activated by ATP to form Thr-AMP and then transferred to the acceptor end of tRNA(Thr). Also edits incorrectly charged L-seryl-tRNA(Thr). The polypeptide is Threonine--tRNA ligase (Pseudomonas putida (strain W619)).